Here is a 391-residue protein sequence, read N- to C-terminus: NADH-quinone oxidoreductase subunit D (391 aa).

This sequence belongs to the complex I 49 kDa subunit family. As to quaternary structure, NDH-1 is composed of 14 different subunits. Subunits NuoB, C, D, E, F, and G constitute the peripheral sector of the complex.

It localises to the cell inner membrane. The catalysed reaction is a quinone + NADH + 5 H(+)(in) = a quinol + NAD(+) + 4 H(+)(out). Its function is as follows. NDH-1 shuttles electrons from NADH, via FMN and iron-sulfur (Fe-S) centers, to quinones in the respiratory chain. The immediate electron acceptor for the enzyme in this species is believed to be ubiquinone. Couples the redox reaction to proton translocation (for every two electrons transferred, four hydrogen ions are translocated across the cytoplasmic membrane), and thus conserves the redox energy in a proton gradient. The sequence is that of NADH-quinone oxidoreductase subunit D from Pelagibacter ubique (strain HTCC1062).